Here is a 54-residue protein sequence, read N- to C-terminus: UPF0181 protein PM0480 (54 aa).

The protein belongs to the UPF0181 family.

The polypeptide is UPF0181 protein PM0480 (Pasteurella multocida (strain Pm70)).